The primary structure comprises 38 residues: Large ribosomal subunit protein bL36 (38 aa).

This sequence belongs to the bacterial ribosomal protein bL36 family.

This chain is Large ribosomal subunit protein bL36, found in Flavobacterium psychrophilum (strain ATCC 49511 / DSM 21280 / CIP 103535 / JIP02/86).